An 819-amino-acid polypeptide reads, in one-letter code: Plastid division protein CDP1, chloroplastic (819 aa).

The transit peptide at 1–76 (MPVAYTFPVL…NAAGGGIHVV (76 aa)) directs the protein to the chloroplast. Residues 77–572 (DNAPSRTSSL…NKIWDEWLSQ (496 aa)) lie on the Stromal side of the membrane. Residues 419-439 (EAEALEKLKQLESNSDSAVRN) are a coiled coil. A helical membrane pass occupies residues 573–593 (SSLIGRVSVVALLGCTVFFSL). The Chloroplast intermembrane segment spans residues 594 to 819 (KLSGIRSGRL…FCQSDIQIQK (226 aa)). Residues 762–782 (IAGEAAEIEALLEEAAELVDE) adopt a coiled-coil conformation.

As to quaternary structure, self-interacts. Interacts (via N-terminus) with ARC3 (via MORN domains). Binds (via N-terminus) to FTSZ2 proteins, FTSZ2-1 and FTSZ2-2. Recruited ARC3 to the middle of the plastid where subsequent complex made of CDP1/PARC6, ARC3 and FtsZ proteins can form; this complex enhances the dynamics of Z rings during chloroplast division. Interacts (via C-terminus) with PDV1 (via C-terminus). Interacts with MIND1. Exclusively expressed in young green tissues such as young cotyledons, shoot apex, emerging leaves and budding inflorescence.

It is found in the plastid. The protein resides in the chloroplast inner membrane. Component of the plastid division machinery required for PDV1 localization to constriction sites. Involved in chloroplast division site placement. Required for the proper formation of FtsZ rings at the division site in nongreen plastids (e.g. etioplasts). Inhibits FtsZ assembly, functioning as an antagonistic regulator of FtsZ dynamics against ARC6, by recruiting ARC3 to the middle of the plastid to facilitate its interaction with FtsZ proteins. Required during stromule biogenesis in the leaf epidermis, especially in non-mesophyll cells plastids. The protein is Plastid division protein CDP1, chloroplastic of Arabidopsis thaliana (Mouse-ear cress).